The chain runs to 354 residues: NADH-quinone oxidoreductase subunit H (354 aa).

Transmembrane regions (helical) follow at residues 25 to 45 (LVRI…LILW), 91 to 111 (WVYL…WAVI), 126 to 146 (LLYA…AGWA), 170 to 190 (MGFA…SDIV), 205 to 225 (FLSW…VSGI), 257 to 277 (LFFL…SILF), 290 to 310 (FIPG…VFIW), and 330 to 350 (VFLP…MSPL).

The protein belongs to the complex I subunit 1 family. In terms of assembly, NDH-1 is composed of 14 different subunits. Subunits NuoA, H, J, K, L, M, N constitute the membrane sector of the complex.

It is found in the cell inner membrane. The catalysed reaction is a quinone + NADH + 5 H(+)(in) = a quinol + NAD(+) + 4 H(+)(out). In terms of biological role, NDH-1 shuttles electrons from NADH, via FMN and iron-sulfur (Fe-S) centers, to quinones in the respiratory chain. The immediate electron acceptor for the enzyme in this species is believed to be ubiquinone. Couples the redox reaction to proton translocation (for every two electrons transferred, four hydrogen ions are translocated across the cytoplasmic membrane), and thus conserves the redox energy in a proton gradient. This subunit may bind ubiquinone. The protein is NADH-quinone oxidoreductase subunit H of Paraburkholderia phymatum (strain DSM 17167 / CIP 108236 / LMG 21445 / STM815) (Burkholderia phymatum).